Here is a 363-residue protein sequence, read N- to C-terminus: Tetraacyldisaccharide 4'-kinase (363 aa).

Residue 78–85 coordinates ATP; it reads TVGGNGKT.

It belongs to the LpxK family.

It catalyses the reaction a lipid A disaccharide + ATP = a lipid IVA + ADP + H(+). It participates in glycolipid biosynthesis; lipid IV(A) biosynthesis; lipid IV(A) from (3R)-3-hydroxytetradecanoyl-[acyl-carrier-protein] and UDP-N-acetyl-alpha-D-glucosamine: step 6/6. Transfers the gamma-phosphate of ATP to the 4'-position of a tetraacyldisaccharide 1-phosphate intermediate (termed DS-1-P) to form tetraacyldisaccharide 1,4'-bis-phosphate (lipid IVA). In Wigglesworthia glossinidia brevipalpis, this protein is Tetraacyldisaccharide 4'-kinase.